A 588-amino-acid polypeptide reads, in one-letter code: MYKNRVELTTTAPVNRALPNAPDGYTPQGETCPSKRPSIRNATALSSAETSWLKARRNNTKDALKAFLSRVDLGSFNGSDYIANHSANASALPNIGIAVSGGGYRALMNGGGALQAFDNRTTNSTHSGQLGGILQSATYLSGLSGGSWLVGSIYMNNFSDVSSLQDNGSVWQFQDSIFSGPTQSTTWDIGTVEYYSQLLGAVDGKSNAGYEVSITDYWGRSLSYQLINASEGGVGYTWSSIALSKDFQAGTMPMPLVIADGRAPGEILVPANTTVFEFNPWEFGSWDKSLSAFVSLEFLGSNFSKGTLATGEKCVRGFDNAGFIMGTSSSLFNQAFLQMNNTDAPSVVKDAISAILGKIGSENNDIAVYKPNPFYRYASQSKYTSSPSLTLVDGGEDLQNIPLDPLLQPQRHVDVILAVDSSADTTTRWPNGTSLVATYERNVDSSQRNSSLPFPSVPDQNTFVNLGLNNRPTFFGCNSSNATGAPLVVYIPNAPYIYPSNVSTFDLQYNTSERNAIIENGYDVATLGNGTVDSNWPACLACAILSRSFERTNTTVPKTCSTCFKTYCWNGTINATTPGDYYPTLKLH.

A disordered region spans residues 15–38; the sequence is NRALPNAPDGYTPQGETCPSKRPS. One can recognise a PLA2c domain in the interval 31 to 574; sequence TCPSKRPSIR…KTYCWNGTIN (544 aa). Residues Asn-41, Asn-58, Asn-77, Asn-84, Asn-88, Asn-119, Asn-123, Asn-157, Asn-167, Asn-228, Asn-272, Asn-302, Asn-340, Asn-431, Asn-449, Asn-478, Asn-481, Asn-501, Asn-510, Asn-529, Asn-553, Asn-570, and Asn-574 are each glycosylated (N-linked (GlcNAc...) asparagine).

The protein belongs to the lysophospholipase family.

The catalysed reaction is a 1-acyl-sn-glycero-3-phosphocholine + H2O = sn-glycerol 3-phosphocholine + a fatty acid + H(+). Functionally, catalyzes the release of fatty acids from lysophospholipids. This chain is Lysophospholipase 2 (plb2), found in Aspergillus fumigatus (strain ATCC MYA-4609 / CBS 101355 / FGSC A1100 / Af293) (Neosartorya fumigata).